We begin with the raw amino-acid sequence, 702 residues long: Elongation factor G (702 aa).

Residues 8 to 290 (SRYRNIGISA…AVIEYLPSPT (283 aa)) enclose the tr-type G domain. GTP is bound by residues 17–24 (AHIDAGKT), 88–92 (DTPGH), and 142–145 (NKMD).

This sequence belongs to the TRAFAC class translation factor GTPase superfamily. Classic translation factor GTPase family. EF-G/EF-2 subfamily.

It is found in the cytoplasm. In terms of biological role, catalyzes the GTP-dependent ribosomal translocation step during translation elongation. During this step, the ribosome changes from the pre-translocational (PRE) to the post-translocational (POST) state as the newly formed A-site-bound peptidyl-tRNA and P-site-bound deacylated tRNA move to the P and E sites, respectively. Catalyzes the coordinated movement of the two tRNA molecules, the mRNA and conformational changes in the ribosome. The polypeptide is Elongation factor G (Edwardsiella ictaluri (strain 93-146)).